Reading from the N-terminus, the 179-residue chain is UPF0316 protein Ping_1367 (179 aa).

2 helical membrane-spanning segments follow: residues 28–48 (FLAS…SAQV) and 55–75 (WYLA…GISI).

This sequence belongs to the UPF0316 family.

It localises to the cell membrane. This is UPF0316 protein Ping_1367 from Psychromonas ingrahamii (strain DSM 17664 / CCUG 51855 / 37).